We begin with the raw amino-acid sequence, 110 residues long: Small ribosomal subunit protein bS16 (110 aa).

Residues 81 to 104 show a composition bias toward basic and acidic residues; sequence VRPAEVLGKQKQEKERSAKKKDAT. The tract at residues 81–110 is disordered; it reads VRPAEVLGKQKQEKERSAKKKDATASETSE.

It belongs to the bacterial ribosomal protein bS16 family.

In Prochlorococcus marinus (strain NATL1A), this protein is Small ribosomal subunit protein bS16.